We begin with the raw amino-acid sequence, 271 residues long: Oxamate carbamoyltransferase subunit AllH (271 aa).

It belongs to the AllH family. The OXTCase is composed of 3 subunits, AllF, AllG and AllH. The cofactor is Mg(2+).

The catalysed reaction is oxamate + carbamoyl phosphate = N-carbamoyl-2-oxoglycine + phosphate. It functions in the pathway nitrogen metabolism; (S)-allantoin degradation. Component of a carbamoyltransferase involved in the anaerobic nitrogen utilization via the assimilation of allantoin. Catalyzes the conversion of oxalurate (N-carbamoyl-2-oxoglycine) to oxamate and carbamoyl phosphate. The polypeptide is Oxamate carbamoyltransferase subunit AllH (Escherichia coli O157:H7).